The primary structure comprises 360 residues: UDP-N-acetylglucosamine--N-acetylmuramyl-(pentapeptide) pyrophosphoryl-undecaprenol N-acetylglucosamine transferase (360 aa).

UDP-N-acetyl-alpha-D-glucosamine is bound by residues Ser198 and Gln289.

This sequence belongs to the glycosyltransferase 28 family. MurG subfamily.

The protein localises to the cell membrane. The catalysed reaction is Mur2Ac(oyl-L-Ala-gamma-D-Glu-L-Lys-D-Ala-D-Ala)-di-trans,octa-cis-undecaprenyl diphosphate + UDP-N-acetyl-alpha-D-glucosamine = beta-D-GlcNAc-(1-&gt;4)-Mur2Ac(oyl-L-Ala-gamma-D-Glu-L-Lys-D-Ala-D-Ala)-di-trans,octa-cis-undecaprenyl diphosphate + UDP + H(+). The protein operates within cell wall biogenesis; peptidoglycan biosynthesis. Functionally, cell wall formation. Catalyzes the transfer of a GlcNAc subunit on undecaprenyl-pyrophosphoryl-MurNAc-pentapeptide (lipid intermediate I) to form undecaprenyl-pyrophosphoryl-MurNAc-(pentapeptide)GlcNAc (lipid intermediate II). The polypeptide is UDP-N-acetylglucosamine--N-acetylmuramyl-(pentapeptide) pyrophosphoryl-undecaprenol N-acetylglucosamine transferase (Streptococcus pyogenes serotype M18 (strain MGAS8232)).